We begin with the raw amino-acid sequence, 148 residues long: Large ribosomal subunit protein uL11 (148 aa).

The disordered stretch occupies residues 89-108; the sequence is EKKKGSGAHKPGKEKVGQVT.

It belongs to the universal ribosomal protein uL11 family. Part of the ribosomal stalk of the 50S ribosomal subunit. Interacts with L10 and the large rRNA to form the base of the stalk. L10 forms an elongated spine to which L12 dimers bind in a sequential fashion forming a multimeric L10(L12)X complex. In terms of processing, one or more lysine residues are methylated.

Functionally, forms part of the ribosomal stalk which helps the ribosome interact with GTP-bound translation factors. In Anaeromyxobacter sp. (strain Fw109-5), this protein is Large ribosomal subunit protein uL11.